The primary structure comprises 171 residues: Putative pre-16S rRNA nuclease (171 aa).

Belongs to the YqgF nuclease family.

It localises to the cytoplasm. Could be a nuclease involved in processing of the 5'-end of pre-16S rRNA. In Corynebacterium diphtheriae (strain ATCC 700971 / NCTC 13129 / Biotype gravis), this protein is Putative pre-16S rRNA nuclease.